The following is an 812-amino-acid chain: Glycerol-3-phosphate acyltransferase (812 aa).

The HXXXXD motif motif lies at 308 to 313; sequence CHRSHM.

Belongs to the GPAT/DAPAT family.

It is found in the cell inner membrane. It catalyses the reaction sn-glycerol 3-phosphate + an acyl-CoA = a 1-acyl-sn-glycero-3-phosphate + CoA. It functions in the pathway phospholipid metabolism; CDP-diacylglycerol biosynthesis; CDP-diacylglycerol from sn-glycerol 3-phosphate: step 1/3. This Pseudoalteromonas translucida (strain TAC 125) protein is Glycerol-3-phosphate acyltransferase.